Consider the following 555-residue polypeptide: Probable Xaa-Pro aminopeptidase BC1G_13431 (555 aa).

The Mn(2+) site is built by D303, D314, E458, and E499. The tract at residues 527–555 is disordered; that stretch reads EGKEQEEEEEREANRKATESRKQKKTWFW. The segment covering 538–547 has biased composition (basic and acidic residues); that stretch reads EANRKATESR.

This sequence belongs to the peptidase M24B family. It depends on Mn(2+) as a cofactor.

It catalyses the reaction Release of any N-terminal amino acid, including proline, that is linked to proline, even from a dipeptide or tripeptide.. In terms of biological role, catalyzes the removal of a penultimate prolyl residue from the N-termini of peptides. This chain is Probable Xaa-Pro aminopeptidase BC1G_13431, found in Botryotinia fuckeliana (strain B05.10) (Noble rot fungus).